The primary structure comprises 361 residues: Peptide chain release factor 1 (361 aa).

Position 236 is an N5-methylglutamine (Gln236).

Belongs to the prokaryotic/mitochondrial release factor family. Methylated by PrmC. Methylation increases the termination efficiency of RF1.

It is found in the cytoplasm. Functionally, peptide chain release factor 1 directs the termination of translation in response to the peptide chain termination codons UAG and UAA. This Lactobacillus delbrueckii subsp. bulgaricus (strain ATCC BAA-365 / Lb-18) protein is Peptide chain release factor 1.